Consider the following 483-residue polypeptide: Fructose-like PTS system EIIBC component (483 aa).

The 105-residue stretch at 1 to 105 folds into the PTS EIIB type-2 domain; the sequence is MESSLRIVAI…IDQIFSELPT (105 aa). Cysteine 13 acts as the Phosphocysteine intermediate; for EIIB activity in catalysis. Position 13 is a phosphocysteine; by EIIA (cysteine 13). Residues 128 to 475 enclose the PTS EIIC type-2 domain; it reads VMSHLMAGVS…LWLRRKAKAA (348 aa). 10 consecutive transmembrane segments (helical) span residues 132-152, 180-200, 204-224, 227-247, 264-284, 303-323, 344-364, 380-400, 402-422, and 442-462; these read LMAG…LVAL, IGYL…ASSI, PAFA…LLGT, GAGF…VFWF, LIPF…IGPV, MKFA…GGPI, AIVG…TFIA, IVVG…AAPL, MITA…AFGI, and VGSF…FIIV.

Its subcellular location is the cell inner membrane. The enzyme catalyses D-fructose(out) + N(pros)-phospho-L-histidyl-[protein] = D-fructose 1-phosphate(in) + L-histidyl-[protein]. Its function is as follows. The phosphoenolpyruvate-dependent sugar phosphotransferase system (sugar PTS), a major carbohydrate active transport system, catalyzes the phosphorylation of incoming sugar substrates concomitantly with their translocation across the cell membrane. The enzyme II FrvAB PTS system is involved in fructose transport. In Escherichia coli (strain K12), this protein is Fructose-like PTS system EIIBC component.